The primary structure comprises 376 residues: Putative clathrin assembly protein At1g25240 (376 aa).

Positions 25–156 constitute an ENTH domain; it reads KTSFRNPDLD…FFLSDQIRRR (132 aa).

The protein localises to the membrane. The protein resides in the clathrin-coated pit. It localises to the golgi apparatus. It is found in the cytoplasmic vesicle. Its subcellular location is the clathrin-coated vesicle. This chain is Putative clathrin assembly protein At1g25240, found in Arabidopsis thaliana (Mouse-ear cress).